Consider the following 216-residue polypeptide: Uracil phosphoribosyltransferase (216 aa).

Residues Arg85, Arg110, and 135 to 143 (DPMVATGYS) contribute to the 5-phospho-alpha-D-ribose 1-diphosphate site. Residues Ile200 and 205–207 (GDA) contribute to the uracil site. Position 206 (Asp206) interacts with 5-phospho-alpha-D-ribose 1-diphosphate.

Belongs to the UPRTase family. Mg(2+) is required as a cofactor.

It carries out the reaction UMP + diphosphate = 5-phospho-alpha-D-ribose 1-diphosphate + uracil. It functions in the pathway pyrimidine metabolism; UMP biosynthesis via salvage pathway; UMP from uracil: step 1/1. Its activity is regulated as follows. Allosterically activated by GTP. Catalyzes the conversion of uracil and 5-phospho-alpha-D-ribose 1-diphosphate (PRPP) to UMP and diphosphate. The sequence is that of Uracil phosphoribosyltransferase from Paraburkholderia phymatum (strain DSM 17167 / CIP 108236 / LMG 21445 / STM815) (Burkholderia phymatum).